We begin with the raw amino-acid sequence, 527 residues long: Peptide chain release factor 3 (527 aa).

The tr-type G domain maps to 9 to 278; sequence NKRRTFAIIS…GLTQWAPKPQ (270 aa). GTP is bound by residues 18-25, 86-90, and 140-143; these read SHPDAGKT, DTPGH, and NKLD.

It belongs to the TRAFAC class translation factor GTPase superfamily. Classic translation factor GTPase family. PrfC subfamily.

It is found in the cytoplasm. Its function is as follows. Increases the formation of ribosomal termination complexes and stimulates activities of RF-1 and RF-2. It binds guanine nucleotides and has strong preference for UGA stop codons. It may interact directly with the ribosome. The stimulation of RF-1 and RF-2 is significantly reduced by GTP and GDP, but not by GMP. The chain is Peptide chain release factor 3 from Haemophilus influenzae (strain PittGG).